The chain runs to 252 residues: Transmembrane ascorbate-dependent reductase CYB561 (252 aa).

The residue at position 1 (Met-1) is an N-acetylmethionine. The Cytoplasmic segment spans residues 1-17; the sequence is MESPAGRTPAPGALPYY. Residues 18 to 38 form a helical membrane-spanning segment; the sequence is VAFSQLLGLTVVAVTGAWLGA. The region spanning 20-221 is the Cytochrome b561 domain; it reads FSQLLGLTVV…FGAVVLYILT (202 aa). Residues 39 to 52 are Vesicular-facing; the sequence is YRGGIAWESALQFN. A helical membrane pass occupies residues 53–73; it reads VHPLCMIIGLVFLQGDALLVY. Residues His-54, Arg-74, and Lys-81 each contribute to the heme b site. Residues 74–85 lie on the Cytoplasmic side of the membrane; sequence RVFRNEAKRTTK. 2 residues coordinate L-ascorbate: Lys-81 and Lys-85. Residues 86–106 traverse the membrane as a helical segment; that stretch reads ILHGLLHVLAFVIALVGLVAV. Heme b-binding positions include His-88, 117–120, and His-122; that span reads DLYS. At 107–125 the chain is on the vesicular side; the sequence is FDYHRKKGIADLYSLHSWC. The chain crosses the membrane as a helical span at residues 126–146; it reads GILVFVLFLAQWLVGLGFFLF. At 147–159 the chain is on the cytoplasmic side; the sequence is PGASFSLRSRYRP. Arg-154 is a binding site for L-ascorbate. Residues 160–180 traverse the membrane as a helical segment; it reads QHVFFGAAIFLLSVGTALLGL. Residues His-161 and Glu-182 each coordinate heme b. Residues 181–199 are Vesicular-facing; the sequence is KEALLFQLGTKYSAFESEG. The chain crosses the membrane as a helical span at residues 200-220; it reads VLANVLGLLLVAFGAVVLYIL. Over 221–252 the chain is Cytoplasmic; sequence TRADWKRPLQAEEQALSMDFKTLTEGDSPSSQ. Lys-226 contributes to the heme b binding site. A phosphoserine mark is found at Ser-248 and Ser-250.

Heme b serves as cofactor.

Its subcellular location is the cytoplasmic vesicle. It localises to the secretory vesicle. The protein localises to the chromaffin granule membrane. The enzyme catalyses monodehydro-L-ascorbate radical(out) + L-ascorbate(in) = monodehydro-L-ascorbate radical(in) + L-ascorbate(out). In terms of biological role, transmembrane reductase that uses ascorbate as an electron donor in the cytoplasm and transfers electrons across membranes to reduce monodehydro-L-ascorbate radical in the lumen of secretory vesicles. It is therefore involved the regeneration and homeostasis within secretory vesicles of ascorbate which in turn provides reducing equivalents needed to support the activity of intravesicular enzymes. The chain is Transmembrane ascorbate-dependent reductase CYB561 (CYB561) from Sus scrofa (Pig).